Here is a 655-residue protein sequence, read N- to C-terminus: A-type voltage-gated potassium channel KCND3 (655 aa).

The Cytoplasmic segment spans residues 1 to 182 (MAAGVAAWLP…FENPHTSTLA (182 aa)). Residues 6–21 (AAWLPFARAAAIGWMP) are interaction with KCNIP1 and KCNIP2. Positions 70–78 (EKEFFFNED) are interaction with KCNIP1. Residues His-104, Cys-110, Cys-131, and Cys-132 each coordinate Zn(2+). Ser-153 carries the post-translational modification Phosphoserine. A helical transmembrane segment spans residues 183–204 (LVFYYVTGFFIAVSVITNVVET). The Extracellular portion of the chain corresponds to 205–223 (VPCGTVPGSKELPCGERYS). A helical transmembrane segment spans residues 224-246 (VAFFCLDTACVMIFTVEYLLRLF). Topologically, residues 247–253 (AAPSRYR) are cytoplasmic. A helical membrane pass occupies residues 254-277 (FIRSVMSIIDVVAIMPYYIGLVMT). Residues 278-283 (NNEDVS) lie on the Extracellular side of the membrane. Residues 284–306 (GAFVTLRVFRVFRIFKFSRHSQG) form a helical; Voltage-sensor membrane-spanning segment. Residues 307-318 (LRILGYTLKSCA) lie on the Cytoplasmic side of the membrane. A helical membrane pass occupies residues 319–343 (SELGFLLFSLTMAIIIFATVMFYAE). Residues 344–352 (KGSSASKFT) lie on the Extracellular side of the membrane. Positions 353 to 366 (SIPASFWYTIVTMT) form an intramembrane region, helical. Residues Thr-367, Leu-368, Gly-369, and Tyr-370 each coordinate K(+). The Selectivity filter motif lies at 367–372 (TLGYGD). Residues 367–374 (TLGYGDMV) lie within the membrane without spanning it. A helical membrane pass occupies residues 378–400 (IAGKIFGSICSLSGVLVIALPVP). Over 401 to 655 (VIVSNFSRIY…ASNVVKVSAL (255 aa)) the chain is Cytoplasmic. At Thr-459 the chain carries Phosphothreonine. Positions 470–487 (SLIESQHHHLLHCLEKTT) are interaction with KCNIP1 and KCNIP2. The interval 472-487 (IESQHHHLLHCLEKTT) is mediates dendritic targeting. The segment covering 525–548 (MQNYPSTRSPSLSSHPGLTTTCCS) has biased composition (polar residues). A disordered region spans residues 525–565 (MQNYPSTRSPSLSSHPGLTTTCCSRRSKKTTHLPNSNLPAT). Ser-569 is modified (phosphoserine; by CaMK2D). Residue Ser-585 is modified to Phosphoserine. Residues 615 to 655 (ISIPTPPALTPEGESRPPPASPGPNTNIPSIASNVVKVSAL) are disordered. The segment covering 637–647 (GPNTNIPSIAS) has biased composition (polar residues).

The protein belongs to the potassium channel family. D (Shal) (TC 1.A.1.2) subfamily. Kv4.3/KCND3 sub-subfamily. In terms of assembly, homotetramer. Heterotetramer with KCND2. Associates with the regulatory subunits KCNIP3 and KCNIP4. Interacts with KCNE1, KCNE2, SCN1B and KCNAB1 and DLG1. Component of heteromultimeric potassium channels. Identified in potassium channel complexes containing KCND1, KCND2, KCND3, KCNIP1, KCNIP2, KCNIP3, KCNIP4, DPP6 and DPP10. Interacts with KCNIP1; each KCNIP1 monomer interacts with two adjacent KCND3 subunits, through both the N-terminal inactivation ball of a KCND3 subunit and a C-terminal helix from the adjacent KCND3 subunit, clamping them together; this interaction stabilizes the tetrameric form and modulates the channel gating kinetics namely channel activation and inactivation kinetics and rate of recovery from inactivation. Interacts with DPP6; this interaction modulates the channel gating kinetics namely channel activation and inactivation kinetics and rate of recovery from inactivation. Interacts with KCNIP2; each KCNIP2 monomer interacts with two adjacent KCND3 subunits, through both the N-terminal inactivation ball of a KCND3 subunit and a C-terminal helix from the adjacent KCND3 subunit, clamping them together; this interaction modulates the channel gating kinetics. In terms of processing, regulated through phosphorylation at Ser-569 by CaMK2D. In terms of tissue distribution, highly expressed in heart and brain, in particular in cortex, cerebellum, amygdala and caudate nucleus. Detected at lower levels in liver, skeletal muscle, kidney and pancreas.

It localises to the cell membrane. It is found in the sarcolemma. The protein resides in the cell projection. Its subcellular location is the dendrite. The enzyme catalyses K(+)(in) = K(+)(out). Its function is as follows. Pore-forming (alpha) subunit of voltage-gated A-type potassium channels that mediates transmembrane potassium transport in excitable membranes, in brain and heart. In cardiomyocytes, may generate the transient outward potassium current I(To). In neurons, may conduct the transient subthreshold somatodendritic A-type potassium current (ISA). Kinetics properties are characterized by fast activation at subthreshold membrane potentials, rapid inactivation, and quick recovery from inactivation. Channel properties are modulated by interactions with regulatory subunits. Interaction with the regulatory subunits KCNIP1 or KCNIP2 modulates the channel gating kinetics namely channel activation and inactivation kinetics and rate of recovery from inactivation. Likewise, interaction with DPP6 modulates the channel gating kinetics namely channel activation and inactivation kinetics. The protein is A-type voltage-gated potassium channel KCND3 (KCND3) of Homo sapiens (Human).